The sequence spans 392 residues: Phospho-N-acetylmuramoyl-pentapeptide-transferase (392 aa).

11 consecutive transmembrane segments (helical) span residues 24–44 (YLTM…LLAG), 76–96 (TMGG…WFDL), 100–120 (FVWI…VDDW), 137–157 (YFWQ…CISE), 170–190 (WVQS…VPFF), 193–213 (VSYP…IVGA), 225–245 (GLAI…AYVT), 262–282 (SGEL…FLWF), 289–309 (VFMG…IAVI), 314–334 (IVLA…MLQV), and 369–389 (QVVI…LSTL).

Belongs to the glycosyltransferase 4 family. MraY subfamily. Mg(2+) is required as a cofactor.

The protein resides in the cell inner membrane. It catalyses the reaction UDP-N-acetyl-alpha-D-muramoyl-L-alanyl-gamma-D-glutamyl-meso-2,6-diaminopimeloyl-D-alanyl-D-alanine + di-trans,octa-cis-undecaprenyl phosphate = di-trans,octa-cis-undecaprenyl diphospho-N-acetyl-alpha-D-muramoyl-L-alanyl-D-glutamyl-meso-2,6-diaminopimeloyl-D-alanyl-D-alanine + UMP. It participates in cell wall biogenesis; peptidoglycan biosynthesis. Functionally, catalyzes the initial step of the lipid cycle reactions in the biosynthesis of the cell wall peptidoglycan: transfers peptidoglycan precursor phospho-MurNAc-pentapeptide from UDP-MurNAc-pentapeptide onto the lipid carrier undecaprenyl phosphate, yielding undecaprenyl-pyrophosphoryl-MurNAc-pentapeptide, known as lipid I. In Delftia acidovorans (strain DSM 14801 / SPH-1), this protein is Phospho-N-acetylmuramoyl-pentapeptide-transferase.